A 102-amino-acid polypeptide reads, in one-letter code: Vesicle-associated membrane protein 5 (102 aa).

At 1 to 72 the chain is on the cytoplasmic side; the sequence is MAGKELERCQ…RWENIRCRVY (72 aa). In terms of domain architecture, v-SNARE coiled-coil homology spans 5 to 65; sequence ELERCQRQAD…KTLAQQKRWE (61 aa). 3 positions are modified to phosphoserine: Ser41, Ser48, and Ser49. Residues 73–93 form a helical; Anchor for type IV membrane protein membrane-spanning segment; that stretch reads LGLAVAGGLLLILVVLLVIFL. Residues 94–102 lie on the Vesicular side of the membrane; that stretch reads PSGEDSSKP.

It belongs to the synaptobrevin family.

The protein resides in the cell membrane. Its subcellular location is the endomembrane system. It localises to the golgi apparatus. It is found in the trans-Golgi network membrane. In terms of biological role, may participate in trafficking events that are associated with myogenesis, such as myoblast fusion and/or GLUT4 trafficking. The chain is Vesicle-associated membrane protein 5 (Vamp5) from Rattus norvegicus (Rat).